The sequence spans 138 residues: Disulfide bond formation protein C (138 aa).

Residues 5–24 (IVFLYASWVVALIAMLGSLY) traverse the membrane as a helical segment. A disulfide bond links C34 and C37. 2 consecutive transmembrane segments (helical) span residues 39–58 (YQRILMYPLVLILGIATFQG) and 65–82 (YVLPMAIIGAFISIMHYL). An intrachain disulfide couples C95 to C101. A helical membrane pass occupies residues 110–132 (GFITIPFLALIAFILIIIFMCLL).

Belongs to the DsbB family. BdbC subfamily.

The protein resides in the cell membrane. It is found in the membrane raft. Its function is as follows. Required for the stabilization, possibly via formation of a disulfide bond, of the obligatory competence protein ComGC. Not normally required for production of the secreted lantibiotic sublancin 168, although it can partially substitute for BdbB when the latter is absent. It may also be required for the stability of other secreted proteins. Not required for sporulation. The chain is Disulfide bond formation protein C (bdbC) from Bacillus subtilis (strain 168).